The primary structure comprises 250 residues: Glycerol-1-phosphate phosphohydrolase 2 (250 aa).

The Nucleophile role is filled by aspartate 18. Mg(2+) is bound by residues aspartate 18 and aspartate 20. Catalysis depends on aspartate 20, which acts as the Proton donor. Lysine 64 participates in a covalent cross-link: Glycyl lysine isopeptide (Lys-Gly) (interchain with G-Cter in ubiquitin). Serine 90 carries the phosphoserine modification. Residue lysine 144 forms a Glycyl lysine isopeptide (Lys-Gly) (interchain with G-Cter in ubiquitin) linkage. Aspartate 179 is a Mg(2+) binding site.

The protein belongs to the HAD-like hydrolase superfamily. DOG/GPP family. As to quaternary structure, monomer. It depends on Mg(2+) as a cofactor.

The protein localises to the cytoplasm. It localises to the nucleus. It catalyses the reaction sn-glycerol 1-phosphate + H2O = glycerol + phosphate. The enzyme catalyses sn-glycerol 3-phosphate + H2O = glycerol + phosphate. Glycerol-1-phosphate phosphohydrolase involved in glycerol biosynthesis. Plays a role in osmoadaptation. The sequence is that of Glycerol-1-phosphate phosphohydrolase 2 from Saccharomyces cerevisiae (strain ATCC 204508 / S288c) (Baker's yeast).